The following is a 531-amino-acid chain: tRNA(Ile)-lysidine synthase (531 aa).

32–37 (SGGMDS) is an ATP binding site.

The protein belongs to the tRNA(Ile)-lysidine synthase family.

The protein resides in the cytoplasm. It catalyses the reaction cytidine(34) in tRNA(Ile2) + L-lysine + ATP = lysidine(34) in tRNA(Ile2) + AMP + diphosphate + H(+). In terms of biological role, ligates lysine onto the cytidine present at position 34 of the AUA codon-specific tRNA(Ile) that contains the anticodon CAU, in an ATP-dependent manner. Cytidine is converted to lysidine, thus changing the amino acid specificity of the tRNA from methionine to isoleucine. This chain is tRNA(Ile)-lysidine synthase, found in Blochmanniella floridana.